The chain runs to 476 residues: ATP synthase subunit beta (476 aa).

154–161 (GGAGVGKT) is a binding site for ATP.

Belongs to the ATPase alpha/beta chains family. In terms of assembly, F-type ATPases have 2 components, CF(1) - the catalytic core - and CF(0) - the membrane proton channel. CF(1) has five subunits: alpha(3), beta(3), gamma(1), delta(1), epsilon(1). CF(0) has four main subunits: a(1), b(1), b'(1) and c(9-12).

The protein resides in the cell inner membrane. The enzyme catalyses ATP + H2O + 4 H(+)(in) = ADP + phosphate + 5 H(+)(out). Functionally, produces ATP from ADP in the presence of a proton gradient across the membrane. The catalytic sites are hosted primarily by the beta subunits. This Rhodopseudomonas palustris (strain HaA2) protein is ATP synthase subunit beta.